Here is a 359-residue protein sequence, read N- to C-terminus: WAT1-related protein At4g16620 (359 aa).

A run of 10 helical transmembrane segments spans residues 5-25 (ETLI…IYAG), 41-61 (LLIV…LAFL), 77-97 (IKLV…FLEG), 105-125 (MATA…WAAG), 143-163 (TVLC…TATL), 183-203 (ILGC…IVLQ), 206-226 (ILAE…MGGI), 246-266 (VIGL…SGGG), 279-299 (PVIV…VSAF), and 305-325 (FNLG…FVLW). An EamA 1 domain is found at 30–154 (LSQLLSLGID…LCVMGALIMS (125 aa)). The EamA 2 domain maps to 206 to 324 (ILAEFPAPIS…LMFGGLYFVL (119 aa)).

The protein belongs to the drug/metabolite transporter (DMT) superfamily. Plant drug/metabolite exporter (P-DME) (TC 2.A.7.4) family.

The protein localises to the membrane. The polypeptide is WAT1-related protein At4g16620 (Arabidopsis thaliana (Mouse-ear cress)).